Consider the following 45-residue polypeptide: Large ribosomal subunit protein bL34 (45 aa).

Positions Arg22–Val45 are disordered. Over residues Lys33–Val45 the composition is skewed to basic residues.

The protein belongs to the bacterial ribosomal protein bL34 family.

This is Large ribosomal subunit protein bL34 from Thermosynechococcus vestitus (strain NIES-2133 / IAM M-273 / BP-1).